The following is an 895-amino-acid chain: WD repeat-containing protein 36 (895 aa).

8 WD repeats span residues 30-63 (VVRFSALKRRFYVTTCVGKSFHTYDVQKLSLVAV), 72-101 (CCMAADGRLVFAAYGNVFSAFARNKEIVHT), 110-143 (HFLQPFGDHIISVDTDGILIIWHIYSEEEYLQLT), 152-186 (SAILHPSTYLNKILLGSEQGSLQLWNVKSNKLLYT), 193-230 (GVTALQQAPAVDVVAIGLMSGQVIIHNIKFNETLMKFR), 237-272 (TSISFRTDGHPVMAAGSPCGHIGLWDLEDKKLINQM), 277-320 (STAI…RFRM), and 327-361 (TNIRYYGQNGQQILSASQDGTLQSFSTVHEKFNKS). Residues Ser-382 and Ser-399 each carry the phosphoserine modification. WD repeat units follow at residues 389-428 (TKFAAEEARESDWDGIIACHQGKLSCSTWNYQKSTIGAYF), 441-475 (ATAVDITSCGNFAVIGLSSGTVDVYNMQSGIHRGS), 486-522 (VRGVAVDGLNQLTVTTGSEGLLKFWNFKNKILIHSVS), 527-562 (PNIMLLHRDSGILGLALDDFSISVLDIETRKIVREF), 564-605 (GHQG…DCFL), and 607-645 (DSAPLNVSMSPTGDFLATSHVDHLGIYLWSNISLYSVVS).

As to quaternary structure, part of the small subunit (SSU) processome, composed of more than 70 proteins and the RNA chaperone small nucleolar RNA (snoRNA) U3. As to expression, expressed in heart, placenta, liver, skeletal muscle, kidney and pancreas. In ocular tissues, strong expression in iris, sclera, ciliary muscle, ciliary body, retina and optic nerve.

Its subcellular location is the nucleus. The protein localises to the nucleolus. Its function is as follows. Part of the small subunit (SSU) processome, first precursor of the small eukaryotic ribosomal subunit. During the assembly of the SSU processome in the nucleolus, many ribosome biogenesis factors, an RNA chaperone and ribosomal proteins associate with the nascent pre-rRNA and work in concert to generate RNA folding, modifications, rearrangements and cleavage as well as targeted degradation of pre-ribosomal RNA by the RNA exosome. Involved in the nucleolar processing of SSU 18S rRNA. Involved in T-cell activation and highly coregulated with IL2. This Homo sapiens (Human) protein is WD repeat-containing protein 36.